Reading from the N-terminus, the 356-residue chain is Phosphoserine aminotransferase (356 aa).

Arg-41 is a binding site for L-glutamate. Pyridoxal 5'-phosphate contacts are provided by residues 76–77 (AS), Trp-102, Thr-150, Asp-169, and Gln-192. Lys-193 carries the N6-(pyridoxal phosphate)lysine modification. 234–235 (NT) serves as a coordination point for pyridoxal 5'-phosphate.

The protein belongs to the class-V pyridoxal-phosphate-dependent aminotransferase family. SerC subfamily. As to quaternary structure, homodimer. Pyridoxal 5'-phosphate is required as a cofactor.

It localises to the cytoplasm. The catalysed reaction is O-phospho-L-serine + 2-oxoglutarate = 3-phosphooxypyruvate + L-glutamate. It carries out the reaction 4-(phosphooxy)-L-threonine + 2-oxoglutarate = (R)-3-hydroxy-2-oxo-4-phosphooxybutanoate + L-glutamate. It participates in amino-acid biosynthesis; L-serine biosynthesis; L-serine from 3-phospho-D-glycerate: step 2/3. The protein operates within cofactor biosynthesis; pyridoxine 5'-phosphate biosynthesis; pyridoxine 5'-phosphate from D-erythrose 4-phosphate: step 3/5. Catalyzes the reversible conversion of 3-phosphohydroxypyruvate to phosphoserine and of 3-hydroxy-2-oxo-4-phosphonooxybutanoate to phosphohydroxythreonine. The protein is Phosphoserine aminotransferase of Flavobacterium johnsoniae (strain ATCC 17061 / DSM 2064 / JCM 8514 / BCRC 14874 / CCUG 350202 / NBRC 14942 / NCIMB 11054 / UW101) (Cytophaga johnsonae).